The chain runs to 122 residues: Small ribosomal subunit protein uS13 (122 aa).

A disordered region spans residues 94–122 (KQLPVRGQRTHTNARTRKGKAKPIAGKKK).

This sequence belongs to the universal ribosomal protein uS13 family. In terms of assembly, part of the 30S ribosomal subunit. Forms a loose heterodimer with protein S19. Forms two bridges to the 50S subunit in the 70S ribosome.

Its function is as follows. Located at the top of the head of the 30S subunit, it contacts several helices of the 16S rRNA. In the 70S ribosome it contacts the 23S rRNA (bridge B1a) and protein L5 of the 50S subunit (bridge B1b), connecting the 2 subunits; these bridges are implicated in subunit movement. Contacts the tRNAs in the A and P-sites. This is Small ribosomal subunit protein uS13 from Methylorubrum populi (strain ATCC BAA-705 / NCIMB 13946 / BJ001) (Methylobacterium populi).